A 224-amino-acid polypeptide reads, in one-letter code: Peroxiredoxin-6 (224 aa).

In terms of domain architecture, Thioredoxin spans 5–169 (LLLGDVAPNF…ILRVVISLQL (165 aa)). Residues 31-40 (DSWGILFSHP) are required and sufficient for targeting to lysosomes and lamellar bodies. Threonine 44 carries the post-translational modification Phosphothreonine. The active-site Cysteine sulfenic acid (-SOH) intermediate; for peroxidase activity is cysteine 47. Position 63 is an N6-acetyllysine (lysine 63). A Phosphotyrosine modification is found at tyrosine 89. The active-site For phospholipase activity is aspartate 140. The residue at position 177 (threonine 177) is a Phosphothreonine; by MAPK. Position 209 is an N6-acetyllysine; alternate (lysine 209). The residue at position 209 (lysine 209) is an N6-succinyllysine; alternate.

It belongs to the peroxiredoxin family. Prx6 subfamily. As to quaternary structure, homodimer. Interacts with GSTP1; mediates PRDX6 glutathionylation and regeneration. Interacts with APEX1. Interacts with STH. May interact with FAM168B. May interact with HTR2A. Post-translationally, irreversibly inactivated by overoxidation of Cys-47 to sulfinic acid (Cys-SO(2)H) and sulfonic acid (Cys-SO(3)H) forms upon oxidative stress. In terms of processing, phosphorylation at Thr-177 by MAP kinases increases the phospholipase activity of the enzyme. The phosphorylated form exhibits a greater lysophosphatidylcholine acyltransferase activity compared to the non-phosphorylated form.

The protein resides in the cytoplasm. The protein localises to the lysosome. The catalysed reaction is a hydroperoxide + 2 glutathione = an alcohol + glutathione disulfide + H2O. The enzyme catalyses a 1,2-diacyl-sn-glycero-3-phosphocholine + H2O = a 1-acyl-sn-glycero-3-phosphocholine + a fatty acid + H(+). It catalyses the reaction a 1-acyl-sn-glycero-3-phosphocholine + an acyl-CoA = a 1,2-diacyl-sn-glycero-3-phosphocholine + CoA. It carries out the reaction 1-hexadecanoyl-sn-glycero-3-phosphocholine + hexadecanoyl-CoA = 1,2-dihexadecanoyl-sn-glycero-3-phosphocholine + CoA. The catalysed reaction is 1,2-dihexadecanoyl-sn-glycero-3-phosphocholine + H2O = 1-hexadecanoyl-sn-glycero-3-phosphocholine + hexadecanoate + H(+). In terms of biological role, thiol-specific peroxidase that catalyzes the reduction of hydrogen peroxide and organic hydroperoxides to water and alcohols, respectively. Can reduce H(2)O(2) and short chain organic, fatty acid, and phospholipid hydroperoxides. Also has phospholipase activity, and can therefore either reduce the oxidized sn-2 fatty acyl group of phospholipids (peroxidase activity) or hydrolyze the sn-2 ester bond of phospholipids (phospholipase activity). These activities are dependent on binding to phospholipids at acidic pH and to oxidized phospholipds at cytosolic pH. Plays a role in cell protection against oxidative stress by detoxifying peroxides and in phospholipid homeostasis. Exhibits acyl-CoA-dependent lysophospholipid acyltransferase which mediates the conversion of lysophosphatidylcholine (1-acyl-sn-glycero-3-phosphocholine or LPC) into phosphatidylcholine (1,2-diacyl-sn-glycero-3-phosphocholine or PC). Shows a clear preference for LPC as the lysophospholipid and for palmitoyl CoA as the fatty acyl substrate. The chain is Peroxiredoxin-6 (PRDX6) from Pongo abelii (Sumatran orangutan).